The primary structure comprises 320 residues: Ferrochelatase (320 aa).

The Fe cation site is built by histidine 194 and glutamate 275.

Belongs to the ferrochelatase family.

The protein localises to the cytoplasm. It carries out the reaction heme b + 2 H(+) = protoporphyrin IX + Fe(2+). It participates in porphyrin-containing compound metabolism; protoheme biosynthesis; protoheme from protoporphyrin-IX: step 1/1. Catalyzes the ferrous insertion into protoporphyrin IX. In Xylella fastidiosa (strain M12), this protein is Ferrochelatase.